A 294-amino-acid polypeptide reads, in one-letter code: ATP phosphoribosyltransferase (294 aa).

This sequence belongs to the ATP phosphoribosyltransferase family. Long subfamily. The cofactor is Mg(2+).

The protein localises to the cytoplasm. The catalysed reaction is 1-(5-phospho-beta-D-ribosyl)-ATP + diphosphate = 5-phospho-alpha-D-ribose 1-diphosphate + ATP. It functions in the pathway amino-acid biosynthesis; L-histidine biosynthesis; L-histidine from 5-phospho-alpha-D-ribose 1-diphosphate: step 1/9. With respect to regulation, feedback inhibited by histidine. Catalyzes the condensation of ATP and 5-phosphoribose 1-diphosphate to form N'-(5'-phosphoribosyl)-ATP (PR-ATP). Has a crucial role in the pathway because the rate of histidine biosynthesis seems to be controlled primarily by regulation of HisG enzymatic activity. The sequence is that of ATP phosphoribosyltransferase from Chlorobium phaeobacteroides (strain DSM 266 / SMG 266 / 2430).